The chain runs to 369 residues: Coiled-coil domain-containing protein 130 homolog (369 aa).

Residues 233–263 (TRYRDTKTHDDHLESSRDRIESRRIFRRPEE) are compositionally biased toward basic and acidic residues. Positions 233 to 369 (TRYRDTKTHD…EYGNSSDDSD (137 aa)) are disordered. The segment covering 266–282 (TPSTSSGSSGGAVPSAS) has biased composition (low complexity). The segment covering 283–297 (ERLKATMKAERDKRI) has biased composition (basic and acidic residues). Low complexity predominate over residues 299 to 310 (ASFSTAGTSSAT).

It belongs to the CWC16 family.

This is Coiled-coil domain-containing protein 130 homolog from Caenorhabditis elegans.